The chain runs to 78 residues: Large ribosomal subunit protein bL31 (78 aa).

This sequence belongs to the bacterial ribosomal protein bL31 family. Type A subfamily. Part of the 50S ribosomal subunit.

Binds the 23S rRNA. This is Large ribosomal subunit protein bL31 from Rickettsia prowazekii (strain Madrid E).